We begin with the raw amino-acid sequence, 398 residues long: Acetate kinase 2 (398 aa).

Asparagine 7 contacts Mg(2+). Residue lysine 14 participates in ATP binding. A substrate-binding site is contributed by arginine 91. Aspartate 148 serves as the catalytic Proton donor/acceptor. ATP-binding positions include 208 to 212 (HLGNG), 283 to 285 (DFR), and 331 to 335 (GVGEN). A Mg(2+)-binding site is contributed by glutamate 384.

It belongs to the acetokinase family. In terms of assembly, homodimer. The cofactor is Mg(2+). Requires Mn(2+) as cofactor.

It localises to the cytoplasm. It catalyses the reaction acetate + ATP = acetyl phosphate + ADP. The protein operates within metabolic intermediate biosynthesis; acetyl-CoA biosynthesis; acetyl-CoA from acetate: step 1/2. Its function is as follows. Catalyzes the formation of acetyl phosphate from acetate and ATP. Can also catalyze the reverse reaction. In Clostridium perfringens (strain 13 / Type A), this protein is Acetate kinase 2.